The primary structure comprises 456 residues: Shootin-1 (456 aa).

Met-1 carries the post-translational modification N-acetylmethionine. A phosphoserine mark is found at Ser-3 and Ser-4. Positions 7-353 (EKQLQLITSL…RVNQSENSVP (347 aa)) form a coiled coil. Phosphoserine; by PAK1 occurs at positions 101 and 249. 2 disordered regions span residues 343–405 (KRVN…VTDL) and 418–445 (KKGV…CESA). The segment covering 352 to 369 (VPPPPPPPPPLPPPPPNP) has biased composition (pro residues). A Phosphoserine modification is found at Ser-375.

This sequence belongs to the shootin family. Interacts with L1CAM; this interaction occurs in axonal growth cones. Interacts with actin filament retrograde flow; this interaction is enhanced in a netrin-1- and PAK1-dependent manner and promotes F-actin-substrate coupling and concomitant formation of traction forces at axonal growth cones. Interacts with RUFY3. Interacts with PFN2. Interacts (via N-terminus) with KIF20B; this interaction is direct and promotes the association of SHTN1 to microtubules in primary neurons. Associates with microtubule. Post-translationally, phosphorylated on Ser-101 and Ser-249 by PAK1 through a CDC42- and RAC1-dependent signaling pathway, which enhances its association with F-actin retrograde flow in filopodia and lamellipodia of axonal growth cones. Phosphorylation on Ser-101 and Ser-249 is increased by netrin-1.

The protein localises to the perikaryon. It localises to the cell projection. The protein resides in the axon. Its subcellular location is the growth cone. It is found in the cytoplasm. The protein localises to the cytoskeleton. It localises to the filopodium. The protein resides in the lamellipodium. In terms of biological role, involved in the generation of internal asymmetric signals required for neuronal polarization and neurite outgrowth. Mediates netrin-1-induced F-actin-substrate coupling or 'clutch engagement' within the axon growth cone through activation of CDC42, RAC1 and PAK1-dependent signaling pathway, thereby converting the F-actin retrograde flow into traction forces, concomitantly with filopodium extension and axon outgrowth. Plays a role in cytoskeletal organization by regulating the subcellular localization of phosphoinositide 3-kinase (PI3K) activity at the axonal growth cone. Also plays a role in regenerative neurite outgrowth. In the developing cortex, cooperates with KIF20B to promote both the transition from the multipolar to the bipolar stage and the radial migration of cortical neurons from the ventricular zone toward the superficial layer of the neocortex. Involved in the accumulation of phosphatidylinositol 3,4,5-trisphosphate (PIP3) in the growth cone of primary hippocampal neurons. The sequence is that of Shootin-1 from Pongo abelii (Sumatran orangutan).